A 296-amino-acid polypeptide reads, in one-letter code: Fructose-bisphosphate aldolase class 1 (296 aa).

Residue Glu175 is the Proton acceptor of the active site. Residue Lys212 is the Schiff-base intermediate with dihydroxyacetone-P of the active site.

The protein belongs to the class I fructose-bisphosphate aldolase family.

It carries out the reaction beta-D-fructose 1,6-bisphosphate = D-glyceraldehyde 3-phosphate + dihydroxyacetone phosphate. The protein operates within carbohydrate degradation; glycolysis; D-glyceraldehyde 3-phosphate and glycerone phosphate from D-glucose: step 4/4. In Staphylococcus epidermidis (strain ATCC 35984 / DSM 28319 / BCRC 17069 / CCUG 31568 / BM 3577 / RP62A), this protein is Fructose-bisphosphate aldolase class 1.